The sequence spans 777 residues: Mediator of RNA polymerase II transcription subunit 15 (777 aa).

Disordered regions lie at residues 120–139 (MNLP…HGIT) and 418–520 (SIPV…EEQQ). Residues 420 to 434 (PVMSSPSPVQQVQTP) are compositionally biased toward low complexity. Positions 435–448 (QPMPPPPQPSPQPS) are enriched in pro residues. A compositionally biased stretch (low complexity) spans 449 to 471 (QPMSQPNSNVSSGPAPSPSSFMP). A compositionally biased stretch (polar residues) spans 500–519 (TPGNPNSVMSPASNNQSEEQ).

It belongs to the Mediator complex subunit 15 family. In terms of assembly, component of the Mediator complex. Interacts with srebf1 and srebf2. Interacts with smad2, smad3 and smad4.

The protein resides in the cytoplasm. It is found in the nucleus. In terms of biological role, component of the Mediator complex, a coactivator involved in the regulated transcription of nearly all RNA polymerase II-dependent genes. Mediator functions as a bridge to convey information from gene-specific regulatory proteins to the basal RNA polymerase II transcription machinery. Mediator is recruited to promoters by direct interactions with regulatory proteins and serves as a scaffold for the assembly of a functional preinitiation complex with RNA polymerase II and the general transcription factors. Required for cholesterol-dependent gene regulation. Positively regulates the Nodal signaling pathway. The chain is Mediator of RNA polymerase II transcription subunit 15 (med15) from Xenopus laevis (African clawed frog).